The chain runs to 244 residues: Uridylate kinase (244 aa).

An ATP-binding site is contributed by 17–20 (KVSG). Residues 25 to 30 (GEKGFG) form an involved in allosteric activation by GTP region. Glycine 59 contacts UMP. Residues glycine 60 and arginine 64 each coordinate ATP. Residues aspartate 80 and 141 to 148 (VGNPFFTT) each bind UMP. Residues threonine 168, glutamine 169, tyrosine 174, and aspartate 177 each coordinate ATP.

The protein belongs to the UMP kinase family. As to quaternary structure, homohexamer.

It localises to the cytoplasm. The enzyme catalyses UMP + ATP = UDP + ADP. Its pathway is pyrimidine metabolism; CTP biosynthesis via de novo pathway; UDP from UMP (UMPK route): step 1/1. Allosterically activated by GTP. Inhibited by UTP. Functionally, catalyzes the reversible phosphorylation of UMP to UDP. This Ehrlichia canis (strain Jake) protein is Uridylate kinase.